An 885-amino-acid polypeptide reads, in one-letter code: MKSSDIRQSFLDFFVGKSHAIVRSAPVIPADDPTLLFTNAGMNQFKDVFLAKGTRSYSRAADTQKCIRASGKHNDLEDVGRDTYHHTFFEMLGNWSFGDYYKEEAITWAWELLTVVWKLPEERLYATVYHDDDESFRIWEEKTSIRPDHILRFGDKDNFWEMGETGPCGPCSEIHIDLTPDGSGRALVNADDPQAIELWNLVFIQYDRQVDGRLEPLPQRHVDTGMGFERVCAVMQGKSSNYDTDVFRPLFDTITELTGVEYGASMHDPQDIAMRVIADHARTLSFALSDGAMPSNEGRGYVLRRILRRALRYAKDLGYNKPILHRLVATVADSMGDVFPELRDRQDAVARIVKAEEESFLVTLDRGIEIFNGLVGKVRGEGSSTLEGEDAFKLYDTYGFPFDLTRLMASSAGLQVDGEGFERCMQEQKTRARQDRREKQRGGAEEGSWEWFSDLHATEFTGYDGLEADASIIGISRSKKNLLLVLDRTPFYAESGGQTGDRGWIETGEYRLEVTDTQKDGDSFVHVVTRAFDNVRDSEADPADIAVGPGRVHASVDRKLRQATERNHTATHLLHAVLRHTLGAHVQQKGSLVNPERLRFDFSHFSKLTPEEIDAVESAVNDCIRQAEATLKHADVPYDDAITKGALAFFGDKYADLVRVVEIPGISVELCGGTHVDNVGQIGLFKIVGESSVAAGVRRIEALTGRAAEELMWNEYRELHDVRQLLKMKAEEPPAEKVAAILEERRALEKQLAELKAEVLLVKLQGDASALEDVCGCRIVARVVDGADAEGLRYAAQMLRQQFPLSAGLLCSSAEGKVSLAAFASDRAVKELGIDAGKLIRQAAAAVKGGGGGKAEFATAGGKNPEGMEDACRVFREAVRCIVKA.

The span at 426 to 444 shows a compositional bias: basic and acidic residues; it reads QEQKTRARQDRREKQRGGA. Residues 426–445 form a disordered region; that stretch reads QEQKTRARQDRREKQRGGAE. Positions 568, 572, 671, and 675 each coordinate Zn(2+).

Belongs to the class-II aminoacyl-tRNA synthetase family. Zn(2+) serves as cofactor.

It is found in the cytoplasm. The enzyme catalyses tRNA(Ala) + L-alanine + ATP = L-alanyl-tRNA(Ala) + AMP + diphosphate. In terms of biological role, catalyzes the attachment of alanine to tRNA(Ala) in a two-step reaction: alanine is first activated by ATP to form Ala-AMP and then transferred to the acceptor end of tRNA(Ala). Also edits incorrectly charged Ser-tRNA(Ala) and Gly-tRNA(Ala) via its editing domain. This is Alanine--tRNA ligase from Chlorobium phaeovibrioides (strain DSM 265 / 1930) (Prosthecochloris vibrioformis (strain DSM 265)).